Here is a 179-residue protein sequence, read N- to C-terminus: Crossover junction endodeoxyribonuclease RuvC (179 aa).

Residues Asp7, Glu67, and Asp139 contribute to the active site. Mg(2+) contacts are provided by Asp7, Glu67, and Asp139.

It belongs to the RuvC family. Homodimer which binds Holliday junction (HJ) DNA. The HJ becomes 2-fold symmetrical on binding to RuvC with unstacked arms; it has a different conformation from HJ DNA in complex with RuvA. In the full resolvosome a probable DNA-RuvA(4)-RuvB(12)-RuvC(2) complex forms which resolves the HJ. Mg(2+) is required as a cofactor.

It localises to the cytoplasm. It carries out the reaction Endonucleolytic cleavage at a junction such as a reciprocal single-stranded crossover between two homologous DNA duplexes (Holliday junction).. Functionally, the RuvA-RuvB-RuvC complex processes Holliday junction (HJ) DNA during genetic recombination and DNA repair. Endonuclease that resolves HJ intermediates. Cleaves cruciform DNA by making single-stranded nicks across the HJ at symmetrical positions within the homologous arms, yielding a 5'-phosphate and a 3'-hydroxyl group; requires a central core of homology in the junction. The consensus cleavage sequence is 5'-(A/T)TT(C/G)-3'. Cleavage occurs on the 3'-side of the TT dinucleotide at the point of strand exchange. HJ branch migration catalyzed by RuvA-RuvB allows RuvC to scan DNA until it finds its consensus sequence, where it cleaves and resolves the cruciform DNA. This Sorangium cellulosum (strain So ce56) (Polyangium cellulosum (strain So ce56)) protein is Crossover junction endodeoxyribonuclease RuvC.